The following is a 118-amino-acid chain: Heavy metal-associated isoprenylated plant protein 12 (118 aa).

Residues 1–65 (MQVVVLKLDV…KICHTEFISV (65 aa)) form the HMA domain. The tract at residues 68–87 (VKEPEKKKPDDPKKPETKPP) is disordered. Positions 69–86 (KEPEKKKPDDPKKPETKP) are enriched in basic and acidic residues. C115 carries the post-translational modification Cysteine methyl ester. C115 carries the S-farnesyl cysteine lipid modification. Residues 116 to 118 (VTS) constitute a propeptide, removed in mature form.

This sequence belongs to the HIPP family.

Functionally, probable heavy-metal-binding protein. The chain is Heavy metal-associated isoprenylated plant protein 12 from Arabidopsis thaliana (Mouse-ear cress).